Reading from the N-terminus, the 538-residue chain is Ribosome-associated complex subunit SSZ1 (538 aa).

The interval 400 to 538 (PVIVNTPHLK…KTGNAVKGEL (139 aa)) is peptide-binding domain. Residues 464 to 484 (PIPKEENAEEDDESEWSDDEP) form a disordered region. The span at 470–484 (NAEEDDESEWSDDEP) shows a compositional bias: acidic residues. A phosphoserine mark is found at S477 and S480.

Belongs to the heat shock protein 70 family. As to quaternary structure, RAC is a heterodimer of the Hsp70/DnaK-type chaperone SSZ1 and the Hsp40/DnaJ-type chaperone ZUO1. RAC associates with ribosomes via ZUO1.

It localises to the cytoplasm. In terms of biological role, component of the ribosome-associated complex (RAC), a heterodimeric chaperone complex involved in regulation of accurate translation termination and in folding or maintaining nascent polypeptides in a folding-competent state. RAC stimulates the ATPase activity of the ribosome-associated pool of Hsp70-type chaperones SSB1/SSB2 that bind to the nascent polypeptide chain. SSZ1 is required for ZUO1 to function efficiently as a J-protein for SSB1/SSB2. Also involved in pleiotropic drug resistance by post-translational activation of transcription factor PDR1. The sequence is that of Ribosome-associated complex subunit SSZ1 (SSZ1) from Saccharomyces cerevisiae (strain ATCC 204508 / S288c) (Baker's yeast).